Here is an 876-residue protein sequence, read N- to C-terminus: Nitrogen regulatory protein areA (876 aa).

A compositionally biased stretch (gly residues) spans 1–11; sequence MSGLTLGGGSG. Disordered stretches follow at residues 1-65, 137-159, 192-248, 393-413, 451-498, and 573-672; these read MSGL…PTDS, QERERAQQQARASSQKSPVPGMS, IPFS…ESEF, FSPPPSGYQSTASTPQPAYDG, YMYN…PNEF, and SADM…GPTT. Composition is skewed to polar residues over residues 198 to 211, 399 to 408, and 455 to 480; these read DHPSPSTTKASEAT, GYQSTASTPQ, and QGGSSQDITQQNAHMGAQSSSMQSPG. Basic and acidic residues predominate over residues 602 to 611; the sequence is VRNRDQDPRR. A compositionally biased stretch (polar residues) spans 615–640; that stretch reads ARTSSTPNTAQLLRQSMQNQSSHTSP. The GATA-type zinc finger occupies 673-697; the sequence is CTNCFTQTTPLWRRNPEGQPLCNAC. The H-T-H motif DNA-binding region spans 721-742; sequence NRNSANSLAVGSSRVSKKSARK. Polar residues-rich tracts occupy residues 724 to 734 and 742 to 766; these read SANSLAVGSSR and KNSVQQVTPTAPTSSRAQSNTTSES. Positions 724-856 are disordered; the sequence is SANSLAVGSS…MPPAAVNPAN (133 aa). Low complexity-rich tracts occupy residues 782–798 and 828–855; these read PIAAAPPKSSSAATTSP and SPSSTSSGGRSKVVPLAPAMPPAAVNPA.

Interacts with nmrA.

It localises to the nucleus. Transcription activator that binds the consensus DNA element 5'-CGATAG-3' and mediates nitrogen metabolite repression. Activates the transcription of uapA. The polypeptide is Nitrogen regulatory protein areA (areA) (Emericella nidulans (strain FGSC A4 / ATCC 38163 / CBS 112.46 / NRRL 194 / M139) (Aspergillus nidulans)).